Consider the following 279-residue polypeptide: Large ribosomal subunit protein uL2 (279 aa).

Positions 223–279 (VAMNPVDHPMGGGEGRSSGGHPRSRKGLYAKGGKTRSANKYSKNMIVKKRVNKRLSK) are disordered. Residues 268 to 279 (IVKKRVNKRLSK) are compositionally biased toward basic residues.

The protein belongs to the universal ribosomal protein uL2 family. Part of the 50S ribosomal subunit. Forms a bridge to the 30S subunit in the 70S ribosome.

Its function is as follows. One of the primary rRNA binding proteins. Required for association of the 30S and 50S subunits to form the 70S ribosome, for tRNA binding and peptide bond formation. It has been suggested to have peptidyltransferase activity; this is somewhat controversial. Makes several contacts with the 16S rRNA in the 70S ribosome. This chain is Large ribosomal subunit protein uL2, found in Cytophaga hutchinsonii (strain ATCC 33406 / DSM 1761 / CIP 103989 / NBRC 15051 / NCIMB 9469 / D465).